The following is a 393-amino-acid chain: Thermostable carboxypeptidase 1 (393 aa).

Positions 104, 109, and 245 each coordinate Zn(2+). Tyr-302 functions as the Proton donor in the catalytic mechanism. Catalysis depends on Glu-373, which acts as the Nucleophile.

This sequence belongs to the peptidase M20 family. In terms of assembly, homotetramer. The cofactor is Zn(2+).

In terms of biological role, can release basic, acidic, aromatic, and, to a lesser extent, aliphatic amino acids. This chain is Thermostable carboxypeptidase 1 (cpsA1), found in Saccharolobus solfataricus (strain ATCC 35092 / DSM 1617 / JCM 11322 / P2) (Sulfolobus solfataricus).